The sequence spans 208 residues: Uracil phosphoribosyltransferase (208 aa).

5-phospho-alpha-D-ribose 1-diphosphate-binding positions include Arg-78, Arg-103, and 130 to 138 (DPMLATGGS). Residues Ile-193 and 198–200 (GDA) each bind uracil. Asp-199 provides a ligand contact to 5-phospho-alpha-D-ribose 1-diphosphate.

Belongs to the UPRTase family. Mg(2+) is required as a cofactor.

The catalysed reaction is UMP + diphosphate = 5-phospho-alpha-D-ribose 1-diphosphate + uracil. The protein operates within pyrimidine metabolism; UMP biosynthesis via salvage pathway; UMP from uracil: step 1/1. Allosterically activated by GTP. Catalyzes the conversion of uracil and 5-phospho-alpha-D-ribose 1-diphosphate (PRPP) to UMP and diphosphate. The sequence is that of Uracil phosphoribosyltransferase from Shewanella baltica (strain OS223).